The chain runs to 756 residues: ATP-dependent 6-phosphofructokinase 2 (756 aa).

An N-terminal catalytic PFK domain 1 region spans residues 1–393 (MEQKFKKGKD…KQTYLNFVSI (393 aa)). ATP is bound by residues Gly20, 81–82 (RC), and 111–114 (GDGS). Asp112 is a binding site for Mg(2+). Substrate-binding positions include 157 to 159 (SID), Arg194, 201 to 203 (MGR), Glu257, Arg285, and 291 to 294 (HLQR). The Proton acceptor role is filled by Asp159. An interdomain linker region spans residues 394-404 (PLSTTMPSRTK). A C-terminal regulatory PFK domain 2 region spans residues 405-756 (TFAVVHIGSP…KKPQEAVLSS (352 aa)). Beta-D-fructose 2,6-bisphosphate contacts are provided by residues Arg474, 530–534 (TISNN), 575–577 (MGS), Glu632, Arg658, and 664–667 (YSQL).

The protein belongs to the phosphofructokinase type A (PFKA) family. ATP-dependent PFK group I subfamily. Eukaryotic two domain clade 'E' sub-subfamily. As to quaternary structure, homotetramer. Mg(2+) is required as a cofactor.

Its subcellular location is the cytoplasm. It catalyses the reaction beta-D-fructose 6-phosphate + ATP = beta-D-fructose 1,6-bisphosphate + ADP + H(+). Its pathway is carbohydrate degradation; glycolysis; D-glyceraldehyde 3-phosphate and glycerone phosphate from D-glucose: step 3/4. With respect to regulation, allosterically activated by ADP, AMP, or fructose 2,6-bisphosphate, and allosterically inhibited by ATP or citrate. In terms of biological role, catalyzes the phosphorylation of D-fructose 6-phosphate to fructose 1,6-bisphosphate by ATP, the first committing step of glycolysis. The sequence is that of ATP-dependent 6-phosphofructokinase 2 from Caenorhabditis elegans.